The primary structure comprises 513 residues: Putative thymidine phosphorylase (513 aa).

The protein belongs to the thymidine/pyrimidine-nucleoside phosphorylase family. Type 2 subfamily.

It carries out the reaction thymidine + phosphate = 2-deoxy-alpha-D-ribose 1-phosphate + thymine. The sequence is that of Putative thymidine phosphorylase from Rhodopseudomonas palustris (strain BisA53).